We begin with the raw amino-acid sequence, 146 residues long: Nuclear export protein (146 aa).

Interacts with host HSC70.

The protein localises to the host cytoplasm. In terms of biological role, may mediate the nuclear export of encapsidated genomic RNAs (ribonucleoproteins, RNPs). Interaction of viral NEP with M1-Hsc70 is thought to promote nuclear export of the viral encapsidated genomes. The protein is Nuclear export protein of Infectious salmon anemia virus (isolate Atlantic salmon/Norway/810/9/99) (ISAV).